The sequence spans 463 residues: General transcription factor IIH subunit 4 (463 aa).

This sequence belongs to the TFB2 family. Component of the 7-subunit TFIIH core complex composed of XPB/ERCC3, XPD/ERCC2, GTF2H1, GTF2H2, GTF2H3, GTF2H4 and GTF2H5, which is active in NER. The core complex associates with the 3-subunit CDK-activating kinase (CAK) module composed of CCNH/cyclin H, CDK7 and MNAT1 to form the 10-subunit holoenzyme (holo-TFIIH) active in transcription. Part of TBP-based Pol II pre-initiation complex (PIC), in which Pol II core assembles with general transcription factors and other specific initiation factors including GTF2E1, GTF2E2, GTF2F1, GTF2F2, TCEA1, ERCC2, ERCC3, GTF2H2, GTF2H3, GTF2H4, GTF2H5, GTF2A1, GTF2A2, GTF2B and TBP; this large multi-subunit PIC complex mediates DNA unwinding and targets Pol II core to the transcription start site where the first phosphodiester bond forms.

The protein localises to the nucleus. Its function is as follows. Component of the general transcription and DNA repair factor IIH (TFIIH) core complex, which is involved in general and transcription-coupled nucleotide excision repair (NER) of damaged DNA and, when complexed to CAK, in RNA transcription by RNA polymerase II. In NER, TFIIH acts by opening DNA around the lesion to allow the excision of the damaged oligonucleotide and its replacement by a new DNA fragment. In transcription, TFIIH has an essential role in transcription initiation. When the pre-initiation complex (PIC) has been established, TFIIH is required for promoter opening and promoter escape. Phosphorylation of the C-terminal tail (CTD) of the largest subunit of RNA polymerase II by the kinase module CAK controls the initiation of transcription. In Mus musculus (Mouse), this protein is General transcription factor IIH subunit 4 (Gtf2h4).